A 161-amino-acid chain; its full sequence is RNA pyrophosphohydrolase (161 aa).

A Nudix hydrolase domain is found at 12 to 154 (PYRPGVGMMI…KRKLYQAVVK (143 aa)). The short motif at 46–67 (GGIVPGETPSIAAMREMLEEIG) is the Nudix box element.

This sequence belongs to the Nudix hydrolase family. RppH subfamily. A divalent metal cation serves as cofactor.

In terms of biological role, accelerates the degradation of transcripts by removing pyrophosphate from the 5'-end of triphosphorylated RNA, leading to a more labile monophosphorylated state that can stimulate subsequent ribonuclease cleavage. The sequence is that of RNA pyrophosphohydrolase from Rickettsia rickettsii (strain Iowa).